The following is a 152-amino-acid chain: Large ribosomal subunit protein bL9 (152 aa).

This sequence belongs to the bacterial ribosomal protein bL9 family.

Functionally, binds to the 23S rRNA. This chain is Large ribosomal subunit protein bL9, found in Parasynechococcus marenigrum (strain WH8102).